The sequence spans 87 residues: Putative phytosulfokines 4 (87 aa).

An N-terminal signal peptide occupies residues 1–23 (MANLSTLITIALLLCATMLTCSA). Positions 24–77 (RPEPAYFASFTTSPADTLSLEMIESKLHEVAGESCDKEDDEDCLVRRTLTAHLD) are excised as a propeptide. Sulfotyrosine occurs at positions 78 and 80. The propeptide occupies 83–87 (KNNHH).

Belongs to the phytosulfokine family. In terms of processing, sulfation is important for activity and for the binding to a putative membrane receptor.

It localises to the secreted. Functionally, promotes plant cell differentiation, organogenesis and somatic embryogenesis as well as cell proliferation. This is Putative phytosulfokines 4 (PSK4) from Arabidopsis thaliana (Mouse-ear cress).